Consider the following 167-residue polypeptide: Transcription factor E (167 aa).

Residues 8 to 90 (NDKVIRGYLI…LWHLDFSDVE (83 aa)) enclose the HTH TFE/IIEalpha-type domain.

Belongs to the TFE family. Monomer. Interaction with RNA polymerase subunits RpoF and RpoE is necessary for Tfe stimulatory transcription activity. Able to interact with Tbp and RNA polymerase in the absence of DNA promoter. Interacts both with the preinitiation and elongation complexes.

Functionally, transcription factor that plays a role in the activation of archaeal genes transcribed by RNA polymerase. Facilitates transcription initiation by enhancing TATA-box recognition by TATA-box-binding protein (Tbp), and transcription factor B (Tfb) and RNA polymerase recruitment. Not absolutely required for transcription in vitro, but particularly important in cases where Tbp or Tfb function is not optimal. It dynamically alters the nucleic acid-binding properties of RNA polymerases by stabilizing the initiation complex and destabilizing elongation complexes. Seems to translocate with the RNA polymerase following initiation and acts by binding to the non template strand of the transcription bubble in elongation complexes. This chain is Transcription factor E, found in Methanosarcina acetivorans (strain ATCC 35395 / DSM 2834 / JCM 12185 / C2A).